Consider the following 345-residue polypeptide: Anthranilate phosphoribosyltransferase (345 aa).

Residues Gly-84, 87 to 88 (GD), Thr-92, 94 to 97 (NIST), 112 to 120 (KHGNRSVSS), and Ser-124 contribute to the 5-phospho-alpha-D-ribose 1-diphosphate site. Residue Gly-84 participates in anthranilate binding. Ser-96 contacts Mg(2+). Residue Asn-115 coordinates anthranilate. Residue Arg-170 participates in anthranilate binding. Residues Asp-229 and Glu-230 each coordinate Mg(2+).

The protein belongs to the anthranilate phosphoribosyltransferase family. Homodimer. The cofactor is Mg(2+).

The enzyme catalyses N-(5-phospho-beta-D-ribosyl)anthranilate + diphosphate = 5-phospho-alpha-D-ribose 1-diphosphate + anthranilate. The protein operates within amino-acid biosynthesis; L-tryptophan biosynthesis; L-tryptophan from chorismate: step 2/5. In terms of biological role, catalyzes the transfer of the phosphoribosyl group of 5-phosphorylribose-1-pyrophosphate (PRPP) to anthranilate to yield N-(5'-phosphoribosyl)-anthranilate (PRA). The protein is Anthranilate phosphoribosyltransferase of Xanthomonas euvesicatoria pv. vesicatoria (strain 85-10) (Xanthomonas campestris pv. vesicatoria).